Here is a 134-residue protein sequence, read N- to C-terminus: Small ribosomal subunit protein uS11 (134 aa).

It belongs to the universal ribosomal protein uS11 family. Part of the 30S ribosomal subunit. Interacts with proteins S7 and S18. Binds to IF-3.

Functionally, located on the platform of the 30S subunit, it bridges several disparate RNA helices of the 16S rRNA. Forms part of the Shine-Dalgarno cleft in the 70S ribosome. This Leptothrix cholodnii (strain ATCC 51168 / LMG 8142 / SP-6) (Leptothrix discophora (strain SP-6)) protein is Small ribosomal subunit protein uS11.